We begin with the raw amino-acid sequence, 886 residues long: Pyruvate dehydrogenase E1 component (886 aa).

As to quaternary structure, homodimer. Part of the PDH complex, consisting of multiple copies of pyruvate dehydrogenase (E1), dihydrolipoamide acetyltransferase (E2) and lipoamide dehydrogenase (E3). It depends on thiamine diphosphate as a cofactor.

The enzyme catalyses N(6)-[(R)-lipoyl]-L-lysyl-[protein] + pyruvate + H(+) = N(6)-[(R)-S(8)-acetyldihydrolipoyl]-L-lysyl-[protein] + CO2. Component of the pyruvate dehydrogenase (PDH) complex, that catalyzes the overall conversion of pyruvate to acetyl-CoA and CO(2). The sequence is that of Pyruvate dehydrogenase E1 component (aceE) from Haemophilus influenzae (strain ATCC 51907 / DSM 11121 / KW20 / Rd).